A 352-amino-acid polypeptide reads, in one-letter code: UDP-3-O-acylglucosamine N-acyltransferase (352 aa).

His257 acts as the Proton acceptor in catalysis.

The protein belongs to the transferase hexapeptide repeat family. LpxD subfamily. As to quaternary structure, homotrimer.

The catalysed reaction is a UDP-3-O-[(3R)-3-hydroxyacyl]-alpha-D-glucosamine + a (3R)-hydroxyacyl-[ACP] = a UDP-2-N,3-O-bis[(3R)-3-hydroxyacyl]-alpha-D-glucosamine + holo-[ACP] + H(+). It participates in bacterial outer membrane biogenesis; LPS lipid A biosynthesis. Its function is as follows. Catalyzes the N-acylation of UDP-3-O-acylglucosamine using 3-hydroxyacyl-ACP as the acyl donor. Is involved in the biosynthesis of lipid A, a phosphorylated glycolipid that anchors the lipopolysaccharide to the outer membrane of the cell. The chain is UDP-3-O-acylglucosamine N-acyltransferase from Methylobacterium sp. (strain 4-46).